The following is a 213-amino-acid chain: Orotate phosphoribosyltransferase (213 aa).

Lys26 lines the 5-phospho-alpha-D-ribose 1-diphosphate pocket. Position 34–35 (34–35 (FF)) interacts with orotate. 5-phospho-alpha-D-ribose 1-diphosphate is bound by residues 72 to 73 (YK), Arg99, Lys100, Lys103, His105, and 124 to 132 (DDVITAGTA). The orotate site is built by Thr128 and Arg156.

This sequence belongs to the purine/pyrimidine phosphoribosyltransferase family. PyrE subfamily. In terms of assembly, homodimer. Requires Mg(2+) as cofactor.

It carries out the reaction orotidine 5'-phosphate + diphosphate = orotate + 5-phospho-alpha-D-ribose 1-diphosphate. Its pathway is pyrimidine metabolism; UMP biosynthesis via de novo pathway; UMP from orotate: step 1/2. Its function is as follows. Catalyzes the transfer of a ribosyl phosphate group from 5-phosphoribose 1-diphosphate to orotate, leading to the formation of orotidine monophosphate (OMP). In Klebsiella pneumoniae subsp. pneumoniae (strain ATCC 700721 / MGH 78578), this protein is Orotate phosphoribosyltransferase.